We begin with the raw amino-acid sequence, 634 residues long: Protein IcfG (634 aa).

Positions H306 to A361 constitute an HAMP domain. The 249-residue stretch at P385–R633 folds into the PPM-type phosphatase domain.

Its function is as follows. Involved in cross-regulation of inorganic carbon and glucose metabolisms. The polypeptide is Protein IcfG (icfG) (Synechocystis sp. (strain ATCC 27184 / PCC 6803 / Kazusa)).